A 77-amino-acid polypeptide reads, in one-letter code: Putative defensin-like protein 158 (77 aa).

A signal peptide spans 1-24; sequence MANISWSHFLILMLVFSVVKKGKG. 4 disulfides stabilise this stretch: Cys31-Cys77, Cys41-Cys60, Cys46-Cys71, and Cys50-Cys73.

Belongs to the DEFL family.

The protein localises to the secreted. The sequence is that of Putative defensin-like protein 158 (LCR23) from Arabidopsis thaliana (Mouse-ear cress).